Here is a 191-residue protein sequence, read N- to C-terminus: Potassium-transporting ATPase KdpC subunit (191 aa).

A helical transmembrane segment spans residues 6–26 (PALVLFILLTLLTGGVYPLLT).

This sequence belongs to the KdpC family. The system is composed of three essential subunits: KdpA, KdpB and KdpC.

Its subcellular location is the cell inner membrane. Functionally, part of the high-affinity ATP-driven potassium transport (or Kdp) system, which catalyzes the hydrolysis of ATP coupled with the electrogenic transport of potassium into the cytoplasm. This subunit acts as a catalytic chaperone that increases the ATP-binding affinity of the ATP-hydrolyzing subunit KdpB by the formation of a transient KdpB/KdpC/ATP ternary complex. This is Potassium-transporting ATPase KdpC subunit from Klebsiella pneumoniae (strain 342).